The sequence spans 637 residues: Threonine--tRNA ligase (637 aa).

The TGS domain maps to 1–61 (MIKITLKDGK…NEDSTLEILT (61 aa)). The segment at 242–532 (DHRKLGKELG…LTEHYAGAFP (291 aa)) is catalytic. Zn(2+)-binding residues include Cys-333, His-384, and His-509.

The protein belongs to the class-II aminoacyl-tRNA synthetase family. In terms of assembly, homodimer. Requires Zn(2+) as cofactor.

The protein resides in the cytoplasm. The catalysed reaction is tRNA(Thr) + L-threonine + ATP = L-threonyl-tRNA(Thr) + AMP + diphosphate + H(+). Catalyzes the attachment of threonine to tRNA(Thr) in a two-step reaction: L-threonine is first activated by ATP to form Thr-AMP and then transferred to the acceptor end of tRNA(Thr). Also edits incorrectly charged L-seryl-tRNA(Thr). The chain is Threonine--tRNA ligase from Clostridium novyi (strain NT).